Reading from the N-terminus, the 2671-residue chain is Inositol 1,4,5-trisphosphate-gated calcium channel ITPR3 (2671 aa).

Over 1 to 2202 the chain is Cytoplasmic; the sequence is MSEMSSFLHI…LIYWFSRRMT (2202 aa). MIR domains lie at 113 to 173, 174 to 224, 232 to 288, 295 to 372, and 378 to 434; these read GDVV…LRSN, GDNV…INLF, EEVL…VEVV, GGAG…LDPT, and DSFV…IVSV. R266, T268, L269, and R270 together coordinate 1D-myo-inositol 1,4,5-trisphosphate. The segment at 322 to 342 is disordered; the sequence is SYKGDASDPKAAGMGAQGRTG. R503, K507, R510, Y567, R568, and K569 together coordinate 1D-myo-inositol 1,4,5-trisphosphate. Residue R743 coordinates Ca(2+). S916 and S934 each carry phosphoserine. The Ca(2+) site is built by E1122 and E1125. Disordered stretches follow at residues 1132–1163 and 1809–1848; these read GSGK…PPGE and NDLG…GPSL. S1813, S1832, and S1834 each carry phosphoserine. Ca(2+)-binding residues include E1882 and E1946. ATP is bound by residues A1996, E2149, and K2152. The helical transmembrane segment at 2203 to 2223 threads the bilayer; sequence LWGSISFNLAVFINIIIAFFY. The Extracellular segment spans residues 2224 to 2235; that stretch reads PYMEGASTGVLD. The chain crosses the membrane as a helical span at residues 2236 to 2256; that stretch reads SPLISLLFWILICFSIAALFT. Residues 2257 to 2264 lie on the Cytoplasmic side of the membrane; sequence KRYSIRPL. A helical membrane pass occupies residues 2265 to 2285; the sequence is IVALILRSIYYLGIGPTLNIL. Residues 2286–2325 are Extracellular-facing; sequence GALNLTNKIVFVVSFVGNRGTFIRGYKAMVMDMEFLYHVG. The helical transmembrane segment at 2326–2346 threads the bilayer; it reads YILTSVLGLFAHELFYSILLF. At 2347–2368 the chain is on the cytoplasmic side; the sequence is DLIYREETLFNVIKSVTRNGRS. A helical membrane pass occupies residues 2369–2389; the sequence is ILLTALLALILVYLFSIVGFL. Topologically, residues 2390-2496 are extracellular; that stretch reads FLKDDFILEV…ESLFPARVVY (107 aa). The cysteines at positions 2455 and 2461 are disulfide-linked. Residues 2497 to 2517 traverse the membrane as a helical segment; the sequence is DLLFFFIVIIIVLNLIFGVII. The Cytoplasmic segment spans residues 2518 to 2671; sequence DTFADLRSEK…FVDVQNCISR (154 aa). ATP contacts are provided by C2538 and F2539. C2538 is a binding site for Zn(2+). The Zn(2+) site is built by C2541 and H2558. ATP contacts are provided by K2560, H2563, N2564, and M2565. H2563 lines the Zn(2+) pocket. A Ca(2+)-binding site is contributed by T2581. A phosphoserine mark is found at S2609 and S2670.

The protein belongs to the InsP3 receptor family. In terms of assembly, homotetramer. Homodimer. Interacts with TRPC1, TRPC3 and TRPC4. Interacts with TRPV4. Interacts with SIGMAR1. Interacts with PML and AKT1. Interacts with IRAG2 (via coiled-coil domain). Interacts with CABP1. Interacts with TMBIM4/LFG4. Interacts with CEMIP. Interacts with TESPA1. Interacts with TMEM203. Interacts with BOK; regulates ITPR3 expression. Interacts with BCL2L10. Interacts with CHGA and CHGB. In terms of processing, phosphorylated by AKT1 on serine and/or threonine residues. As to expression, expressed in intestinal crypt and villus epithelial cells.

The protein resides in the endoplasmic reticulum membrane. It is found in the cytoplasmic vesicle. The protein localises to the secretory vesicle membrane. It carries out the reaction Ca(2+)(in) = Ca(2+)(out). Its activity is regulated as follows. Inositol 1,4,5-trisphosphate-gated calcium channel is regulated by cytosolic calcium in a biphasic manner. At low concentrations, cytosolic calcium binds at a high-affinity juxtamembrane domain (JD) calcium binding site, allowing ITPR3 to activate by escaping a low-energy resting state through an ensemble of preactivated states. At high cytosolic calcium concentrations, ITPR3 preferentially enters an inhibited state stabilized by calcium binding at a second, low-affinity cytoplasmic domain (CD) calcium binding site. In terms of biological role, inositol 1,4,5-trisphosphate-gated calcium channel that, upon 1D-myo-inositol 1,4,5-trisphosphate binding, transports calcium from the endoplasmic reticulum lumen to cytoplasm, thus releasing the intracellular calcium and therefore participates in cellular calcium ion homeostasis. 1D-myo-inositol 1,4,5-trisphosphate binds to the ligand-free channel without altering its global conformation, yielding the low-energy resting state, then progresses through resting-to preactivated transitions to the higher energy preactivated state, which increases affinity for calcium, promoting binding of the low basal cytosolic calcium at the juxtamembrane domain (JD) site, favoring the transition through the ensemble of high-energy intermediate states along the trajectory to the fully-open activated state. Upon opening, releases calcium in the cytosol where it can bind to the low-affinity cytoplasmic domain (CD) site and stabilizes the inhibited state to terminate calcium release. This Homo sapiens (Human) protein is Inositol 1,4,5-trisphosphate-gated calcium channel ITPR3.